Reading from the N-terminus, the 164-residue chain is Large ribosomal subunit protein uL10 (164 aa).

Belongs to the universal ribosomal protein uL10 family. As to quaternary structure, part of the ribosomal stalk of the 50S ribosomal subunit. The N-terminus interacts with L11 and the large rRNA to form the base of the stalk. The C-terminus forms an elongated spine to which L12 dimers bind in a sequential fashion forming a multimeric L10(L12)X complex.

Its function is as follows. Forms part of the ribosomal stalk, playing a central role in the interaction of the ribosome with GTP-bound translation factors. The sequence is that of Large ribosomal subunit protein uL10 from Helicobacter pylori (strain HPAG1).